Here is a 79-residue protein sequence, read N- to C-terminus: MORN repeat-containing protein 2 (79 aa).

MORN repeat units lie at residues 15–37 (YEGH…NGAK) and 38–60 (YTGN…QGLE).

This chain is MORN repeat-containing protein 2 (MORN2), found in Bos taurus (Bovine).